Reading from the N-terminus, the 87-residue chain is Probable Fe(2+)-trafficking protein (87 aa).

It belongs to the Fe(2+)-trafficking protein family.

Could be a mediator in iron transactions between iron acquisition and iron-requiring processes, such as synthesis and/or repair of Fe-S clusters in biosynthetic enzymes. This chain is Probable Fe(2+)-trafficking protein, found in Francisella tularensis subsp. novicida (strain U112).